Reading from the N-terminus, the 119-residue chain is Beta-2-microglobulin (119 aa).

The signal sequence occupies residues 1 to 20 (MAPFVAIALLVLLSLSGLEA). Residues 25 to 114 (PKIQVYSRHP…VTFSTPKTVK (90 aa)) enclose the Ig-like C1-type domain. Cys-45 and Cys-100 are disulfide-bonded.

It belongs to the beta-2-microglobulin family. Heterodimer of an alpha chain and a beta chain. Beta-2-microglobulin is the beta-chain of major histocompatibility complex class I molecules.

The protein resides in the secreted. Its function is as follows. Component of the class I major histocompatibility complex (MHC). Involved in the presentation of peptide antigens to the immune system. The polypeptide is Beta-2-microglobulin (B2M) (Cheracebus torquatus (Collared titi monkey)).